A 231-amino-acid polypeptide reads, in one-letter code: 2-C-methyl-D-erythritol 4-phosphate cytidylyltransferase (231 aa).

The protein belongs to the IspD/TarI cytidylyltransferase family. IspD subfamily.

The catalysed reaction is 2-C-methyl-D-erythritol 4-phosphate + CTP + H(+) = 4-CDP-2-C-methyl-D-erythritol + diphosphate. It participates in isoprenoid biosynthesis; isopentenyl diphosphate biosynthesis via DXP pathway; isopentenyl diphosphate from 1-deoxy-D-xylulose 5-phosphate: step 2/6. Catalyzes the formation of 4-diphosphocytidyl-2-C-methyl-D-erythritol from CTP and 2-C-methyl-D-erythritol 4-phosphate (MEP). The polypeptide is 2-C-methyl-D-erythritol 4-phosphate cytidylyltransferase (Xylella fastidiosa (strain M23)).